The primary structure comprises 1407 residues: DNA-directed RNA polymerase subunit beta' (1407 aa).

Zn(2+) contacts are provided by Cys70, Cys72, Cys85, and Cys88. Positions 460, 462, and 464 each coordinate Mg(2+). Positions 814, 888, 895, and 898 each coordinate Zn(2+).

It belongs to the RNA polymerase beta' chain family. In terms of assembly, the RNAP catalytic core consists of 2 alpha, 1 beta, 1 beta' and 1 omega subunit. When a sigma factor is associated with the core the holoenzyme is formed, which can initiate transcription. Mg(2+) is required as a cofactor. Zn(2+) serves as cofactor.

The enzyme catalyses RNA(n) + a ribonucleoside 5'-triphosphate = RNA(n+1) + diphosphate. In terms of biological role, DNA-dependent RNA polymerase catalyzes the transcription of DNA into RNA using the four ribonucleoside triphosphates as substrates. The sequence is that of DNA-directed RNA polymerase subunit beta' from Salmonella arizonae (strain ATCC BAA-731 / CDC346-86 / RSK2980).